Here is a 705-residue protein sequence, read N- to C-terminus: CAP-Gly domain-containing linker protein 4 (705 aa).

ANK repeat units lie at residues 65 to 101 (TSVS…NVND), 149 to 180 (TNMN…DVDA), and 186 to 215 (NFGT…NPAF). Positions 303 to 345 (GTTEFASGQWAGIELDEPEGKNNGSVGKVQYFKCAPKYGIFAP) constitute a CAP-Gly 1 domain. Disordered stretches follow at residues 391 to 410 (MTSK…PGEE) and 431 to 479 (TSSL…ANNS). Polar residues predominate over residues 441–452 (PKKQNAISSNKK). Over residues 455–479 (SKSPSLSSRASAGLNSSATSTANNS) the composition is skewed to low complexity. Residues 505 to 547 (GTTNFAPGYWYGIELEKPHGKNDGSVGGVQYFSCSPRYGIFAP) enclose the CAP-Gly 2 domain. 2 positions are modified to phosphoserine: Ser557 and Ser609. A CAP-Gly 3 domain is found at 644–686 (GPTDFASGIWLGLELRSAKGKNDGSVGDKRYFTCKPNHGVLVR).

This Homo sapiens (Human) protein is CAP-Gly domain-containing linker protein 4 (CLIP4).